A 70-amino-acid polypeptide reads, in one-letter code: DNA-directed RNA polymerase subunit omega (70 aa).

This sequence belongs to the RNA polymerase subunit omega family. In terms of assembly, in cyanobacteria the RNAP catalytic core is composed of 2 alpha, 1 beta, 1 beta', 1 gamma and 1 omega subunit. When a sigma factor is associated with the core the holoenzyme is formed, which can initiate transcription.

It carries out the reaction RNA(n) + a ribonucleoside 5'-triphosphate = RNA(n+1) + diphosphate. Its function is as follows. Promotes RNA polymerase assembly. Latches the N- and C-terminal regions of the beta' subunit thereby facilitating its interaction with the beta and alpha subunits. This chain is DNA-directed RNA polymerase subunit omega, found in Prochlorococcus marinus (strain NATL1A).